A 193-amino-acid chain; its full sequence is Superoxide dismutase [Fe] (193 aa).

Residues histidine 27, histidine 75, aspartate 159, and histidine 163 each contribute to the Fe cation site.

This sequence belongs to the iron/manganese superoxide dismutase family. As to quaternary structure, homodimer. The cofactor is Fe cation.

It catalyses the reaction 2 superoxide + 2 H(+) = H2O2 + O2. In terms of biological role, destroys superoxide anion radicals which are normally produced within the cells and which are toxic to biological systems. The protein is Superoxide dismutase [Fe] (sodB) of Bacteroides fragilis (strain YCH46).